We begin with the raw amino-acid sequence, 1235 residues long: UPF0507 protein DEHA2G04334g (1235 aa).

Residues 323–487 enclose the VPS9 domain; sequence QNDDSDAIKI…LSSSMNDEPQ (165 aa). Residues 1097 to 1124 are disordered; the sequence is STTEADTTDTTDATDATHASPNLANSTN. Positions 1100 to 1115 are enriched in low complexity; the sequence is EADTTDTTDATDATHA.

This sequence belongs to the UPF0507 family.

The polypeptide is UPF0507 protein DEHA2G04334g (Debaryomyces hansenii (strain ATCC 36239 / CBS 767 / BCRC 21394 / JCM 1990 / NBRC 0083 / IGC 2968) (Yeast)).